The sequence spans 129 residues: Photosystem II reaction center Psb28 protein (129 aa).

The interval 110 to 129 (GLGYSNNSGNNEGADEASEG) is disordered.

Belongs to the Psb28 family. Part of the photosystem II complex.

The protein localises to the cellular thylakoid membrane. The chain is Photosystem II reaction center Psb28 protein from Synechococcus sp. (strain WH7803).